A 105-amino-acid polypeptide reads, in one-letter code: uncharacterized protein (105 aa).

Over residues 1-11 the composition is skewed to basic residues; it reads MPHRNDRRKSA. A disordered region spans residues 1–20; it reads MPHRNDRRKSASKAPNAIIH.

The protein belongs to the ALB1 family.

The protein resides in the nucleus. Its subcellular location is the nucleolus. This is an uncharacterized protein from Schizosaccharomyces pombe (strain 972 / ATCC 24843) (Fission yeast).